A 1358-amino-acid chain; its full sequence is Retrotransposon-like protein 1 (1358 aa).

Disordered stretches follow at residues 1 to 159 (MIEP…TEHS) and 563 to 616 (ADVF…TAPW). The segment covering 19 to 30 (SSKQMESSEGSS) has biased composition (low complexity). A compositionally biased stretch (acidic residues) spans 65–79 (EMEELPTDLLQDMEE). A compositionally biased stretch (basic and acidic residues) spans 131 to 149 (AREEQEAHTDLKESGREET). A compositionally biased stretch (acidic residues) spans 583 to 592 (GSDDLSESEP). Helical transmembrane passes span 1083–1099 (LLYW…LVLL) and 1126–1146 (LILD…TQLL). 2 disordered regions span residues 1250 to 1283 (DGLQ…PRHL) and 1338 to 1358 (QPRE…ANLD). Residues 1267 to 1276 (APPSHTAATH) are compositionally biased toward low complexity. Residues 1338–1347 (QPREQARLEE) are compositionally biased toward basic and acidic residues. Residues 1348 to 1358 (LPDEDEDANLD) are compositionally biased toward acidic residues.

Its subcellular location is the membrane. In terms of biological role, plays an essential role in capillaries endothelial cells for the maintenance of feto-maternal interface and for development of the placenta. The sequence is that of Retrotransposon-like protein 1 (RTL1) from Homo sapiens (Human).